We begin with the raw amino-acid sequence, 272 residues long: Exosome complex component Rrp42 (272 aa).

Belongs to the RNase PH family. Rrp42 subfamily. In terms of assembly, component of the archaeal exosome complex. Forms a hexameric ring-like arrangement composed of 3 Rrp41-Rrp42 heterodimers. The hexameric ring associates with a trimer of Rrp4 and/or Csl4 subunits.

It localises to the cytoplasm. Functionally, non-catalytic component of the exosome, which is a complex involved in RNA degradation. Contributes to the structuring of the Rrp41 active site. The sequence is that of Exosome complex component Rrp42 from Thermococcus onnurineus (strain NA1).